Reading from the N-terminus, the 243-residue chain is Methylthioribulose-1-phosphate dehydratase (243 aa).

Cys90 serves as a coordination point for substrate. Zn(2+)-binding residues include His108 and His110. Glu131 (proton donor/acceptor) is an active-site residue. His193 serves as a coordination point for Zn(2+).

This sequence belongs to the aldolase class II family. MtnB subfamily. Zn(2+) is required as a cofactor.

The protein resides in the cytoplasm. It catalyses the reaction 5-(methylsulfanyl)-D-ribulose 1-phosphate = 5-methylsulfanyl-2,3-dioxopentyl phosphate + H2O. It functions in the pathway amino-acid biosynthesis; L-methionine biosynthesis via salvage pathway; L-methionine from S-methyl-5-thio-alpha-D-ribose 1-phosphate: step 2/6. Functionally, catalyzes the dehydration of methylthioribulose-1-phosphate (MTRu-1-P) into 2,3-diketo-5-methylthiopentyl-1-phosphate (DK-MTP-1-P). The sequence is that of Methylthioribulose-1-phosphate dehydratase from Zygosaccharomyces rouxii (strain ATCC 2623 / CBS 732 / NBRC 1130 / NCYC 568 / NRRL Y-229).